The following is a 588-amino-acid chain: Adenine deaminase (588 aa).

It belongs to the metallo-dependent hydrolases superfamily. Adenine deaminase family. In terms of assembly, homodimer. Requires Mn(2+) as cofactor.

It catalyses the reaction adenine + H2O + H(+) = hypoxanthine + NH4(+). This Escherichia fergusonii (strain ATCC 35469 / DSM 13698 / CCUG 18766 / IAM 14443 / JCM 21226 / LMG 7866 / NBRC 102419 / NCTC 12128 / CDC 0568-73) protein is Adenine deaminase.